The following is a 172-amino-acid chain: Methylated-DNA--protein-cysteine methyltransferase (172 aa).

The active-site Nucleophile; methyl group acceptor is Cys142.

Belongs to the MGMT family.

The protein resides in the cytoplasm. The catalysed reaction is a 6-O-methyl-2'-deoxyguanosine in DNA + L-cysteinyl-[protein] = S-methyl-L-cysteinyl-[protein] + a 2'-deoxyguanosine in DNA. The enzyme catalyses a 4-O-methyl-thymidine in DNA + L-cysteinyl-[protein] = a thymidine in DNA + S-methyl-L-cysteinyl-[protein]. Functionally, involved in the cellular defense against the biological effects of O6-methylguanine (O6-MeG) and O4-methylthymine (O4-MeT) in DNA. Repairs the methylated nucleobase in DNA by stoichiometrically transferring the methyl group to a cysteine residue in the enzyme. This is a suicide reaction: the enzyme is irreversibly inactivated. This Pyrococcus horikoshii (strain ATCC 700860 / DSM 12428 / JCM 9974 / NBRC 100139 / OT-3) protein is Methylated-DNA--protein-cysteine methyltransferase.